The following is a 1337-amino-acid chain: Activated Cdc42 kinase-like (1337 aa).

Ser-71 is subject to Phosphoserine. One can recognise a Protein kinase domain in the interval 133-399 (ISVNKQLGTG…GEIYDQLPDM (267 aa)). Residues 139–147 (LGTGEFGIV) and Lys-164 contribute to the ATP site. The active-site Proton acceptor is Asp-260. Tyr-291 and Tyr-292 each carry phosphotyrosine. One can recognise an SH3 domain in the interval 399-460 (MKPEQLKAVV…NPSNTVAFLE (62 aa)). Positions 488–502 (ISKPQNDFKHTGHVG) constitute a CRIB domain. The tract at residues 714 to 739 (SGDTNGNKHGHGLLPTLSKKKSSGTV) is disordered. Ser-764 and Ser-778 each carry phosphoserine. Positions 786–822 (RFPHLSNNGSGDKSGGLGTSGSAHTPTHGNASPFPKK) are disordered. A compositionally biased stretch (polar residues) spans 805 to 815 (SGSAHTPTHGN). A phosphoserine mark is found at Ser-831, Ser-918, and Ser-924. 2 disordered regions span residues 906–969 (AGLS…TSTK) and 1024–1045 (PSGM…PTVG). Positions 947 to 957 (PESPNPIPLPP) are enriched in pro residues.

The protein belongs to the protein kinase superfamily. Tyr protein kinase family.

It catalyses the reaction L-tyrosyl-[protein] + ATP = O-phospho-L-tyrosyl-[protein] + ADP + H(+). Its function is as follows. Likely to act as a downstream effector of Cdc42 during dorsal closure, acting in a kinase independent manner with the other ACK family member Ack to positively regulate expression of the myosin zip by promoting the endocytosis of Egfr in the amnioserosa (AS). The polypeptide is Activated Cdc42 kinase-like (Drosophila melanogaster (Fruit fly)).